A 128-amino-acid chain; its full sequence is Ribonuclease P protein component (128 aa).

The protein belongs to the RnpA family. Consists of a catalytic RNA component (M1 or rnpB) and a protein subunit.

The catalysed reaction is Endonucleolytic cleavage of RNA, removing 5'-extranucleotides from tRNA precursor.. In terms of biological role, RNaseP catalyzes the removal of the 5'-leader sequence from pre-tRNA to produce the mature 5'-terminus. It can also cleave other RNA substrates such as 4.5S RNA. The protein component plays an auxiliary but essential role in vivo by binding to the 5'-leader sequence and broadening the substrate specificity of the ribozyme. This Prochlorococcus marinus (strain NATL1A) protein is Ribonuclease P protein component.